The following is a 211-amino-acid chain: Envelope protein UL45 homolog (211 aa).

The Intravirion portion of the chain corresponds to 1–46 (MMSPTPEDDRDLVVVRGRLRMMDNGAEHDRERRSYTAWPHLCCGCT). Residues 47-67 (IGIILTMFVIATTLLLASLFA) form a helical; Signal-anchor for type II membrane protein membrane-spanning segment. The Virion surface portion of the chain corresponds to 68-211 (FSYMSLESGT…SSILSNAIMK (144 aa)). Residues asparagine 96 and asparagine 133 are each glycosylated (N-linked (GlcNAc...) asparagine; by host).

It belongs to the herpesviridae HHV-1 UL45 family.

The protein localises to the virion membrane. The chain is Envelope protein UL45 homolog (UL45H) from Gallid herpesvirus 2 (strain Chicken/Md5/ATCC VR-987) (GaHV-2).